A 129-amino-acid polypeptide reads, in one-letter code: NADH-quinone oxidoreductase subunit A (129 aa).

3 helical membrane-spanning segments follow: residues 14–34 (LAIH…VAAW), 67–87 (FLIA…FAWA), and 95–115 (WLGL…LVYL).

It belongs to the complex I subunit 3 family. As to quaternary structure, NDH-1 is composed of 14 different subunits. Subunits NuoA, H, J, K, L, M, N constitute the membrane sector of the complex.

Its subcellular location is the cell inner membrane. It carries out the reaction a quinone + NADH + 5 H(+)(in) = a quinol + NAD(+) + 4 H(+)(out). Functionally, NDH-1 shuttles electrons from NADH, via FMN and iron-sulfur (Fe-S) centers, to quinones in the respiratory chain. The immediate electron acceptor for the enzyme in this species is believed to be ubiquinone. Couples the redox reaction to proton translocation (for every two electrons transferred, four hydrogen ions are translocated across the cytoplasmic membrane), and thus conserves the redox energy in a proton gradient. In Rhodopseudomonas palustris (strain ATCC BAA-98 / CGA009), this protein is NADH-quinone oxidoreductase subunit A.